Reading from the N-terminus, the 191-residue chain is Probable nicotinate-nucleotide adenylyltransferase (191 aa).

This sequence belongs to the NadD family.

It catalyses the reaction nicotinate beta-D-ribonucleotide + ATP + H(+) = deamido-NAD(+) + diphosphate. Its pathway is cofactor biosynthesis; NAD(+) biosynthesis; deamido-NAD(+) from nicotinate D-ribonucleotide: step 1/1. Catalyzes the reversible adenylation of nicotinate mononucleotide (NaMN) to nicotinic acid adenine dinucleotide (NaAD). This is Probable nicotinate-nucleotide adenylyltransferase from Staphylococcus epidermidis (strain ATCC 12228 / FDA PCI 1200).